Reading from the N-terminus, the 136-residue chain is Protein NrdI (136 aa).

This sequence belongs to the NrdI family.

Probably involved in ribonucleotide reductase function. In Salmonella paratyphi A (strain ATCC 9150 / SARB42), this protein is Protein NrdI.